Consider the following 593-residue polypeptide: Sodium-independent sulfate anion transporter (593 aa).

The Extracellular segment spans residues 1-34; that stretch reads MAPDTCCCSATALRRRLPVLAWVPDYSLQWLRLD. A helical transmembrane segment spans residues 35–55; the sequence is FIAGLSVGLTVIPQALAYAEV. A topological domain (cytoplasmic) is located at residue Ala-56. The helical transmembrane segment at 57–77 threads the bilayer; it reads GLPPQYGLYSAFMGCFVYFFL. Residues 78–82 lie on the Extracellular side of the membrane; sequence GTSRD. Residues 83–100 traverse the membrane as a helical segment; the sequence is VTLGPTAIMSLLVSFYTF. Over 101 to 106 the chain is Cytoplasmic; the sequence is REPAYA. The helical transmembrane segment at 107-127 threads the bilayer; it reads VLLAFLSGCIQLAMGLLHLGF. Residues 128–176 lie on the Extracellular side of the membrane; the sequence is LLDFISCPVIKGFTSAASITIGFGQIKNLLGLQKIPRQFFLQVYHTFLH. The chain crosses the membrane as a helical span at residues 177–197; sequence IGETRVGDAVLGLASMLLLLV. Over 198 to 233 the chain is Cytoplasmic; the sequence is LKCMREHMPPPHPEMPLAVKFSRGLVWTVTTARNAL. The chain crosses the membrane as a helical span at residues 234–254; sequence VVSSAALIAYAFEVTGSHPFV. The Extracellular segment spans residues 255–287; the sequence is LTGKIAEGLPPVRIPPFSVTRDNKTISFSEMVQ. Residues 288-308 traverse the membrane as a helical segment; it reads DMGAGLAVVPLMGLLESIAVA. Residues 309-324 are Cytoplasmic-facing; the sequence is KSFASQNNYRIDANQE. A helical membrane pass occupies residues 325–345; the sequence is LLAIGLTNVLGSLVSSYPVTG. Over 346–361 the chain is Extracellular; sequence SFGRTAVNAQTGVCTP. A helical membrane pass occupies residues 362–382; that stretch reads AGGLVTGALVLLSLNYLTSLF. A topological domain (cytoplasmic) is located at residue Ser-383. The helical transmembrane segment at 384–404 threads the bilayer; that stretch reads YIPKSALAAVIITAVTPLFDV. The Extracellular segment spans residues 405 to 417; it reads KIFRSLWRVQRLD. Residues 418–438 traverse the membrane as a helical segment; the sequence is LLPLCVTFLLSFWEIQYGILA. The Cytoplasmic portion of the chain corresponds to 439 to 593; sequence GSLVSLLILL…SSLLKSPSGP (155 aa). The STAS domain maps to 453–566; sequence RPKTQVSEGQ…EEAEKFLQQE (114 aa). Positions 564–593 are disordered; the sequence is QQEPGTEPNSIHEDAVPEQRSSLLKSPSGP. Residues 582-593 show a composition bias toward polar residues; that stretch reads QRSSLLKSPSGP.

The protein belongs to the SLC26A/SulP transporter (TC 2.A.53) family. As to expression, abundantly expressed in the cerebellum, with a predominant expression in Purkinje cells (at protein level). Predominantly expressed in the kidney and brain. In the kidney localizes in collecting duct intercalated cells (at protein level). In terms of tissue distribution, predominantly expressed in the brain with lower levels in the kidney.

It localises to the cell membrane. The protein localises to the lysosome membrane. It is found in the apical cell membrane. Its subcellular location is the basolateral cell membrane. It carries out the reaction hydrogencarbonate(in) + chloride(out) = hydrogencarbonate(out) + chloride(in). The enzyme catalyses sulfate(in) + H(+)(in) = sulfate(out) + H(+)(out). The catalysed reaction is oxalate(in) + chloride(out) = oxalate(out) + chloride(in). Sodium-independent anion exchanger mediating bicarbonate, chloride, sulfate and oxalate transport. Exhibits sodium-independent sulfate anion transporter activity that may cooperate with SLC26A2 to mediate DIDS-sensitive sulfate uptake into high endothelial venules endothelial cells (HEVEC). In the kidney, mediates chloride-bicarbonate exchange, facilitating V-ATPase-mediated acid secretion. May function as a chloride channel, playing an important role in moderating chloride homeostasis and neuronal activity in the cerebellum. The sequence is that of Sodium-independent sulfate anion transporter from Mus musculus (Mouse).